Consider the following 326-residue polypeptide: Heterodimeric geranylgeranyl pyrophosphate synthase small subunit, chloroplastic (326 aa).

A chloroplast-targeting transit peptide spans 1-33 (MLFSGSAIPLSSFCSLPEKPHTLPMKLSPAAIR). 2 residues coordinate isopentenyl diphosphate: K88 and H120. 2 residues coordinate Mg(2+): D127 and D133. R138 lines the dimethylallyl diphosphate pocket. An isopentenyl diphosphate-binding site is contributed by R139. Dimethylallyl diphosphate-binding residues include K220 and Q258. Residues 274–301 (GAEKGMMEMAEELKEKAKKELQVFDNKY) adopt a coiled-coil conformation.

This sequence belongs to the FPP/GGPP synthase family. As to quaternary structure, part of a heterodimeric geranyl(geranyl)diphosphate synthase. Interacts with GGPPS1 or GGPPS2, but not with GGPPS9. Interacts with LIL3.1 and LIL3.2. It depends on Mg(2+) as a cofactor. Expressed ubiquitously.

The protein localises to the plastid. It is found in the chloroplast thylakoid membrane. Heterodimeric geranyl(geranyl)-diphosphate (GPP) synthase small subunit. The small subunit alone is inactive in vitro while the large subunit GGPPS1 catalyzes mainly the production of geranygeranyl-diphosphate in vitro. Upon association of the two subunits, the product profile changes and the production of gerany-diphosphate is strongly increased. The chain is Heterodimeric geranylgeranyl pyrophosphate synthase small subunit, chloroplastic (GGR) from Arabidopsis thaliana (Mouse-ear cress).